A 347-amino-acid polypeptide reads, in one-letter code: UDP-3-O-acylglucosamine N-acyltransferase (347 aa).

Residue His-241 is the Proton acceptor of the active site.

Belongs to the transferase hexapeptide repeat family. LpxD subfamily. As to quaternary structure, homotrimer.

The catalysed reaction is a UDP-3-O-[(3R)-3-hydroxyacyl]-alpha-D-glucosamine + a (3R)-hydroxyacyl-[ACP] = a UDP-2-N,3-O-bis[(3R)-3-hydroxyacyl]-alpha-D-glucosamine + holo-[ACP] + H(+). Its pathway is bacterial outer membrane biogenesis; LPS lipid A biosynthesis. Its function is as follows. Catalyzes the N-acylation of UDP-3-O-acylglucosamine using 3-hydroxyacyl-ACP as the acyl donor. Is involved in the biosynthesis of lipid A, a phosphorylated glycolipid that anchors the lipopolysaccharide to the outer membrane of the cell. This Neisseria meningitidis serogroup A / serotype 4A (strain DSM 15465 / Z2491) protein is UDP-3-O-acylglucosamine N-acyltransferase.